Here is a 175-residue protein sequence, read N- to C-terminus: Probable coatomer subunit zeta-A (175 aa).

The protein belongs to the adaptor complexes small subunit family. Oligomeric complex that consists of at least the alpha, beta, beta', gamma, delta, epsilon and zeta subunits.

It localises to the cytoplasm. The protein localises to the golgi apparatus membrane. The protein resides in the cytoplasmic vesicle. Its subcellular location is the COPI-coated vesicle membrane. In terms of biological role, the coatomer is a cytosolic protein complex that binds to dilysine motifs and reversibly associates with Golgi non-clathrin-coated vesicles, which further mediate biosynthetic protein transport from the ER, via the Golgi up to the trans Golgi network. Coatomer complex is required for budding from Golgi membranes, and is essential for the retrograde Golgi-to-ER transport of dilysine-tagged proteins. The zeta subunit may be involved in regulating the coat assembly and, hence, the rate of biosynthetic protein transport due to its association-dissociation properties with the coatomer complex. The polypeptide is Probable coatomer subunit zeta-A (copZa) (Dictyostelium discoideum (Social amoeba)).